The chain runs to 72 residues: Bowman-Birk type proteinase inhibitor 2a (72 aa).

Intrachain disulfides connect cysteine 8–cysteine 61, cysteine 9–cysteine 24, cysteine 12–cysteine 57, cysteine 14–cysteine 22, cysteine 31–cysteine 38, cysteine 35–cysteine 50, and cysteine 40–cysteine 48.

In terms of assembly, dimer.

In terms of biological role, inhibits trypsin (IC(50)=0.9 nM) and alpha-chymotrypsin (IC(50)=1.1 nM). This is Bowman-Birk type proteinase inhibitor 2a from Lathyrus sativus (White vetchling).